The primary structure comprises 255 residues: Cysteine protease avirulence protein AvrRpt2 (255 aa).

The segment at 1 to 50 (MKIAPVAINHSPLSREVPSHAAPTQAKQTNLQSEAGDLDARKSSASSPET) is disordered. Residues 1 to 71 (MKIAPVAINH…RHKIEVPAFG (71 aa)) constitute a propeptide, removed in mature form. The interval 70–71 (FG) is determinants of cleavage specificity. The tract at residues 76-100 (KKSSKHETGGSSANADSSSVASDST) is disordered. Over residues 86-98 (SSANADSSSVASD) the composition is skewed to low complexity. The active-site Nucleophile is Cys122. Catalysis depends on residues His208 and Asp226.

This sequence belongs to the peptidase C70 family. As to quaternary structure, interacts physically with plant cell ROC1 (Arabidopsis single-domain cyclophilin) and RIN4. Post-translationally, autocleaved inside plant cells upon activation by cyclophilin. Cleavage is crucial in subcellular location and in eliciting HR. Inhibited by cyclosporin A (cyclophilin inhibitor).

It localises to the secreted. The protein resides in the host cell membrane. Functionally, effector protein involved in gene-for-gene resistance in plants expressing RPS2. Its thiol protease activity is required for the degradation of plant cell RIN4 and consequent activation of RPS2 during bacterial infection. The activation of RPS2 is sufficient for the induction of hypersensitive response (HR) and plant resistance. Cleavage of RIN4 by AvrRpt2 also interferes with RPM1-mediated resistance activated by either AvrRpm1 or AvrB. Contributes to virulence in plants lacking the resistance protein RPS2 promoting pathogen growth and disease symptoms. Inhibits PAMP (pathogen-associated molecular patterns)-induced signaling compromising the host's basal defense system. Blocks plant callose deposition, flg22 (a peptide corresponding to the most conserved domain of flagellin) induced accumulation of PR-1, PR-2 and PR-5 and activation of GST6 transcription. The mechanism of virulence is unknown, but this activity is independent of ethylene and salicylic acid response pathways and independent of RIN4 disappearance. The polypeptide is Cysteine protease avirulence protein AvrRpt2 (avrRpt2) (Pseudomonas syringae pv. tomato).